Reading from the N-terminus, the 381-residue chain is Glycerate kinase (381 aa).

Belongs to the glycerate kinase type-1 family.

The enzyme catalyses (R)-glycerate + ATP = (2R)-3-phosphoglycerate + ADP + H(+). The polypeptide is Glycerate kinase (glxK) (Bacillus cereus (strain ATCC 10987 / NRS 248)).